The chain runs to 733 residues: Protein OBERON 3 (733 aa).

Basic and acidic residues predominate over residues 1–15 (MIGEKDLAGDGECSR). Disordered regions lie at residues 1–42 (MIGE…YHQK) and 118–142 (NPNS…KKSN). Positions 21–30 (PRFSNLNNQT) are enriched in polar residues. A coiled-coil region spans residues 120-153 (NSSKRKAHEEEEEAEEEEDKKSNKIETLNLSLAL). Residues 436–500 (SCMCPVCLRF…MFHCIGCAHK (65 aa)) form a PHD-type zinc finger. Residues 592–614 (VAAETSYRKDEASVTPSTSKDQK) are disordered. Positions 644-733 (MFQKKADEAR…RMEVTRQQLV (90 aa)) form a coiled coil.

In terms of assembly, self-interacts. Interacts with OBE1 and OBE2. Interacts with OBE4.

The protein resides in the nucleus. Probable transcription factor that functions redundantly with OBE4 in specification of the hypophysis and establishment of the embryonic root. Involved in the activation of ARF5/MP-dependent gene expression during embryonic root meristem initiation. Involved in shoot meristem homeostasis. This is Protein OBERON 3 from Arabidopsis thaliana (Mouse-ear cress).